The sequence spans 716 residues: Tensin-4 (716 aa).

Positions 1–17 (MSQVMSSPLLAGGPAVG) are cleaved as a signal peptide. Disordered regions lie at residues 119–274 (LPPG…VSML), 301–322 (QSSSRSLESPSSSSSSLNNLGP), 334–366 (VPSNATPSMGQPRATRSPPLAKEHASSCPPSIT), and 379–436 (GFPE…RDMQ). Residues 138–150 (KKKEEPEALDIKY) show a composition bias toward basic and acidic residues. Residues 197–206 (SSESLIFSGS) are compositionally biased toward polar residues. Pro residues predominate over residues 214–228 (PAPPSAVPSSHPPTS). Position 248 is a phosphoserine (serine 248). Residues 265-274 (PQLSSRVSML) are compositionally biased toward polar residues. Polar residues predominate over residues 402 to 419 (ATSSSMPCPATRSHSQTL). One can recognise an SH2 domain in the interval 449–556 (WFKPSISREQ…ALPCKLVIPQ (108 aa)). One can recognise a PTB domain in the interval 583 to 704 (CHALYLSSVS…TLQPASQVIR (122 aa)).

It belongs to the PTEN phosphatase protein family. As to quaternary structure, interacts (via SH2 domain) with Rho GTPase-activating protein DLC1 (via C-terminus); the interaction is independent of DLC1 tyrosine phosphorylation. Interacts with integrin ITGB1; the interaction displaces tensin TNS3 from the ITGB1 cytoplasmic tail and promotes ITGB1 stability. Interacts (via SH2 domain) with E3 ubiquitin-protein ligase CBL (phosphorylated on 'Tyr-782'); the interaction is enhanced in the presence of EGF and reduces interaction of CBL with EGFR. Interacts (via SH2 domain) with receptor tyrosine kinase MET (when phosphorylated); the interaction increases MET protein stability.

Its subcellular location is the cell junction. It localises to the focal adhesion. It is found in the cytoplasm. The protein localises to the cytoskeleton. Its function is as follows. Promotes EGF-induced cell migration by displacing tensin TNS3 from the cytoplasmic tail of integrin ITGB1 which results in dissociation of TNS3 from focal adhesions, disassembly of actin stress fibers and initiation of cell migration. Suppresses ligand-induced degradation of EGFR by reducing EGFR ubiquitination in the presence of EGF. Increases MET protein stability by inhibiting MET endocytosis and subsequent lysosomal degradation which leads to increased cell survival, proliferation and migration. This Bos taurus (Bovine) protein is Tensin-4 (TNS4).